Reading from the N-terminus, the 367-residue chain is Heme A synthase (367 aa).

5 consecutive transmembrane segments (helical) span residues 25 to 45, 111 to 131, 139 to 159, 174 to 194, and 210 to 230; these read ALRLWLGFVLLALFCLVLVGG, LIARGIGVIFALPLIFFWLTG, WPLVGILALGGLQGFIGWWMV, LATHLVMACLIFAGCMWIMRG, and GFAAAIAIFALFQIYLGALVA. His-274 is a heme binding site. 3 helical membrane-spanning segments follow: residues 276-296, 305-325, and 327-347; these read IGAYTLFALTLINMVIALRAA, AVVLFSLVTLQAAIGIATLLM, and VPLHWGLLHQAGALVVFGFAV. His-335 provides a ligand contact to heme.

The protein belongs to the COX15/CtaA family. Type 2 subfamily. As to quaternary structure, interacts with CtaB. It depends on heme b as a cofactor.

It localises to the cell membrane. It carries out the reaction Fe(II)-heme o + 2 A + H2O = Fe(II)-heme a + 2 AH2. Its pathway is porphyrin-containing compound metabolism; heme A biosynthesis; heme A from heme O: step 1/1. Catalyzes the conversion of heme O to heme A by two successive hydroxylations of the methyl group at C8. The first hydroxylation forms heme I, the second hydroxylation results in an unstable dihydroxymethyl group, which spontaneously dehydrates, resulting in the formyl group of heme A. The polypeptide is Heme A synthase (Rhizobium etli (strain CIAT 652)).